We begin with the raw amino-acid sequence, 467 residues long: Cysteine--tRNA ligase (467 aa).

C27 lines the Zn(2+) pocket. Positions 29-39 (PTVYNYIHIGN) match the 'HIGH' region motif. The Zn(2+) site is built by C207, H232, and E236. The 'KMSKS' region motif lies at 264 to 268 (KMSKS). K267 serves as a coordination point for ATP.

This sequence belongs to the class-I aminoacyl-tRNA synthetase family. In terms of assembly, monomer. Requires Zn(2+) as cofactor.

The protein resides in the cytoplasm. The enzyme catalyses tRNA(Cys) + L-cysteine + ATP = L-cysteinyl-tRNA(Cys) + AMP + diphosphate. The polypeptide is Cysteine--tRNA ligase (Caldanaerobacter subterraneus subsp. tengcongensis (strain DSM 15242 / JCM 11007 / NBRC 100824 / MB4) (Thermoanaerobacter tengcongensis)).